The following is a 279-amino-acid chain: Shikimate dehydrogenase (NADP(+)) (279 aa).

Shikimate-binding positions include 18–20 (SRS) and Thr-64. The Proton acceptor role is filled by Lys-68. Glu-80 is a binding site for NADP(+). Shikimate-binding residues include Asn-89 and Asp-104. NADP(+) contacts are provided by residues 129 to 133 (GAGGA), 153 to 158 (NRTVSR), and Ile-218. Residue Tyr-220 participates in shikimate binding. Gly-241 is an NADP(+) binding site.

It belongs to the shikimate dehydrogenase family. In terms of assembly, homodimer.

The catalysed reaction is shikimate + NADP(+) = 3-dehydroshikimate + NADPH + H(+). It functions in the pathway metabolic intermediate biosynthesis; chorismate biosynthesis; chorismate from D-erythrose 4-phosphate and phosphoenolpyruvate: step 4/7. Its function is as follows. Involved in the biosynthesis of the chorismate, which leads to the biosynthesis of aromatic amino acids. Catalyzes the reversible NADPH linked reduction of 3-dehydroshikimate (DHSA) to yield shikimate (SA). The sequence is that of Shikimate dehydrogenase (NADP(+)) from Chelativorans sp. (strain BNC1).